Consider the following 146-residue polypeptide: Large ribosomal subunit protein uL15 (146 aa).

Residues 1-54 (MTIKLHDLRPAPGSKTPRTRVGRGEGSKGKTAGRGTKGTKARKQVPTTFEGGQM) form a disordered region.

It belongs to the universal ribosomal protein uL15 family. In terms of assembly, part of the 50S ribosomal subunit.

Its function is as follows. Binds to the 23S rRNA. This is Large ribosomal subunit protein uL15 from Mycobacterium ulcerans (strain Agy99).